Consider the following 337-residue polypeptide: MTQPLVGKQILIVEDEQVFRSLLDSWFSSLGATTVLAADGVDALELLGGFTPDLMICDIAMPRMNGLKLLEHIRNRGDQTPVLVISATENMADIAKALRLGVEDVLLKPVKDLNRLREMVFACLYPSMFNSRVEEEERLFRDWDAMVDNPAAAAKLLQELQPPVQQVISHCRVNYRQLVAADKPGLVLDIAALSENDLAFYCLDVTRAGHNGVLAALLLRALFNGLLQEQLAHQNQRLPELGALLKQVNHLLRQANLPGQFPLLVGYYHRELKNLILVSAGLNATLNTGEHQVQISNGVPLGTLGNAYLNQLSQRCDAWQCQIWGTGGRLRLMLSAE.

The region spanning 9–123 (QILIVEDEQV…NRLREMVFAC (115 aa)) is the Response regulatory domain. D58 bears the 4-aspartylphosphate mark.

The protein belongs to the RssB family. As to quaternary structure, binds to RpoS. Phosphorylated. Phosphorylation stimulates the interaction with RpoS and, therefore, the proteolysis of RpoS.

Functionally, regulates the turnover of the sigma S factor (RpoS) by promoting its proteolysis in exponentially growing cells. Acts by binding and delivering RpoS to the ClpXP protease. RssB is not co-degraded with RpoS, but is released from the complex and can initiate a new cycle of RpoS recognition and degradation. The sequence is that of Regulator of RpoS from Shigella flexneri.